The chain runs to 599 residues: Elongation factor 4 (599 aa).

A tr-type G domain is found at 2 to 184 (KNIRNFSIIA…RLVRDIPPPQ (183 aa)). GTP contacts are provided by residues 14-19 (DHGKST) and 131-134 (NKID).

This sequence belongs to the TRAFAC class translation factor GTPase superfamily. Classic translation factor GTPase family. LepA subfamily.

Its subcellular location is the cell inner membrane. It carries out the reaction GTP + H2O = GDP + phosphate + H(+). Its function is as follows. Required for accurate and efficient protein synthesis under certain stress conditions. May act as a fidelity factor of the translation reaction, by catalyzing a one-codon backward translocation of tRNAs on improperly translocated ribosomes. Back-translocation proceeds from a post-translocation (POST) complex to a pre-translocation (PRE) complex, thus giving elongation factor G a second chance to translocate the tRNAs correctly. Binds to ribosomes in a GTP-dependent manner. The protein is Elongation factor 4 of Salmonella arizonae (strain ATCC BAA-731 / CDC346-86 / RSK2980).